Consider the following 245-residue polypeptide: Exosome complex component RRP41 (245 aa).

Alanine 2 is modified (N-acetylalanine).

Belongs to the RNase PH family. Component of the RNA exosome core complex (Exo-9), composed of EXOSC1, EXOSC2, EXOSC3, EXOSC4, EXOSC5, EXOSC6, EXOSC7, EXOSC8 and EXOSC9; within the complex interacts with EXOSC2, EXOSC7 and EXOSC9. The catalytically inactive RNA exosome core complex (Exo-9) associates with the catalytic subunit EXOSC10/RRP6. Exo-9 may associate with DIS3 to form the nucleolar exosome complex, or DIS3L to form the cytoplasmic exosome complex. Exo-9 is formed by a hexameric base ring consisting of the heterodimers EXOSC4-EXOSC9, EXOSC5-EXOSC8 and EXOSC6-EXOSC7, and a cap ring consisting of EXOSC1, EXOSC2 and EXOSC3. The RNA exosome complex associates with cofactors C1D/RRP47, MPHOSPH6/MPP6 and MTREX/MTR4. Interacts with DDX60. Interacts with DIS3; the interaction is direct.

It is found in the cytoplasm. The protein resides in the nucleus. Its subcellular location is the nucleolus. The protein localises to the nucleoplasm. In terms of biological role, non-catalytic component of the RNA exosome complex which has 3'-&gt;5' exoribonuclease activity and participates in a multitude of cellular RNA processing and degradation events. In the nucleus, the RNA exosome complex is involved in proper maturation of stable RNA species such as rRNA, snRNA and snoRNA, in the elimination of RNA processing by-products and non-coding 'pervasive' transcripts, such as antisense RNA species and promoter-upstream transcripts (PROMPTs), and of mRNAs with processing defects, thereby limiting or excluding their export to the cytoplasm. The RNA exosome may be involved in Ig class switch recombination (CSR) and/or Ig variable region somatic hypermutation (SHM) by targeting AICDA deamination activity to transcribed dsDNA substrates. In the cytoplasm, the RNA exosome complex is involved in general mRNA turnover and specifically degrades inherently unstable mRNAs containing AU-rich elements (AREs) within their 3' untranslated regions, and in RNA surveillance pathways, preventing translation of aberrant mRNAs. It seems to be involved in degradation of histone mRNA. The catalytic inactive RNA exosome core complex of 9 subunits (Exo-9) is proposed to play a pivotal role in the binding and presentation of RNA for ribonucleolysis, and to serve as a scaffold for the association with catalytic subunits and accessory proteins or complexes. EXOSC4 binds to ARE-containing RNAs. The chain is Exosome complex component RRP41 (EXOSC4) from Homo sapiens (Human).